The chain runs to 326 residues: MSRADEGRLIHLAKKREREKEDIEKQLRKLEEDKEKCKVGITSKFTANYETMEESVKSKTYGLVSLDDMKNIQKNEISNRDLQVARGASSSTSLAKDSQEAREKEEHVAKHTQKRVLSFAYEDEEEDEDAAPIVPKKRVGMDPTVDTSFLPDKEREEFLRKKKEELAAEWRVKQNTEKNEEITVAYAYWDGSSHRKNMKVKKGNTISQCLARAIEALKKEFTELKACTPENLMFVKEDLIIPHFYTFQDFIVTKAMGKTGPLFVFDSASDVRIRQDAALDYGESHPAKIVLRSWYEKNKHIYPASRWEPFVPSKKYGRNFDDLSDL.

Residues 76–112 are disordered; sequence EISNRDLQVARGASSSTSLAKDSQEAREKEEHVAKHT. Positions 97-109 are enriched in basic and acidic residues; sequence DSQEAREKEEHVA.

Belongs to the FAM50 family.

This Caenorhabditis briggsae protein is Protein FAM50 homolog.